The sequence spans 346 residues: Dihydroorotase (346 aa).

Zn(2+) contacts are provided by histidine 13 and histidine 15. Residues 15-17 (HLR) and asparagine 41 each bind substrate. Positions 99, 136, and 174 each coordinate Zn(2+). At lysine 99 the chain carries N6-carboxylysine. Histidine 136 contributes to the substrate binding site. Leucine 219 contacts substrate. Aspartate 247 lines the Zn(2+) pocket. The active site involves aspartate 247. Substrate-binding residues include histidine 251 and alanine 263.

The protein belongs to the metallo-dependent hydrolases superfamily. DHOase family. Class II DHOase subfamily. As to quaternary structure, homodimer. Requires Zn(2+) as cofactor.

It catalyses the reaction (S)-dihydroorotate + H2O = N-carbamoyl-L-aspartate + H(+). Its pathway is pyrimidine metabolism; UMP biosynthesis via de novo pathway; (S)-dihydroorotate from bicarbonate: step 3/3. Catalyzes the reversible cyclization of carbamoyl aspartate to dihydroorotate. The sequence is that of Dihydroorotase from Rhizobium leguminosarum bv. trifolii (strain WSM2304).